The chain runs to 88 residues: Elongation factor 1-beta (88 aa).

This sequence belongs to the EF-1-beta/EF-1-delta family.

Promotes the exchange of GDP for GTP in EF-1-alpha/GDP, thus allowing the regeneration of EF-1-alpha/GTP that could then be used to form the ternary complex EF-1-alpha/GTP/AAtRNA. The protein is Elongation factor 1-beta of Natronomonas pharaonis (strain ATCC 35678 / DSM 2160 / CIP 103997 / JCM 8858 / NBRC 14720 / NCIMB 2260 / Gabara) (Halobacterium pharaonis).